We begin with the raw amino-acid sequence, 415 residues long: 1-deoxy-D-xylulose 5-phosphate reductoisomerase (415 aa).

Residues Thr10, Gly11, Ser12, Ile13, Gly36, Arg37, Asn38, and Asn128 each contribute to the NADPH site. A 1-deoxy-D-xylulose 5-phosphate-binding site is contributed by Lys129. Position 130 (Glu130) interacts with NADPH. Mn(2+) is bound at residue Asp154. 4 residues coordinate 1-deoxy-D-xylulose 5-phosphate: Ser155, Glu156, Ser192, and His215. Glu156 serves as a coordination point for Mn(2+). Residue Gly221 participates in NADPH binding. 1-deoxy-D-xylulose 5-phosphate-binding residues include Ser228, Asn233, Lys234, and Glu237. Glu237 lines the Mn(2+) pocket.

This sequence belongs to the DXR family. The cofactor is Mg(2+). Mn(2+) serves as cofactor.

It catalyses the reaction 2-C-methyl-D-erythritol 4-phosphate + NADP(+) = 1-deoxy-D-xylulose 5-phosphate + NADPH + H(+). The protein operates within isoprenoid biosynthesis; isopentenyl diphosphate biosynthesis via DXP pathway; isopentenyl diphosphate from 1-deoxy-D-xylulose 5-phosphate: step 1/6. Its function is as follows. Catalyzes the NADPH-dependent rearrangement and reduction of 1-deoxy-D-xylulose-5-phosphate (DXP) to 2-C-methyl-D-erythritol 4-phosphate (MEP). In Synechococcus sp. (strain CC9605), this protein is 1-deoxy-D-xylulose 5-phosphate reductoisomerase.